The sequence spans 400 residues: Glutamyl-tRNA reductase (400 aa).

Substrate is bound by residues 45 to 48 (TCNR), serine 103, 108 to 110 (EDQ), and glutamine 114. Cysteine 46 functions as the Nucleophile in the catalytic mechanism. 179-184 (GYGEIG) is an NADP(+) binding site.

It belongs to the glutamyl-tRNA reductase family. In terms of assembly, homodimer.

The catalysed reaction is (S)-4-amino-5-oxopentanoate + tRNA(Glu) + NADP(+) = L-glutamyl-tRNA(Glu) + NADPH + H(+). The protein operates within porphyrin-containing compound metabolism; protoporphyrin-IX biosynthesis; 5-aminolevulinate from L-glutamyl-tRNA(Glu): step 1/2. Its function is as follows. Catalyzes the NADPH-dependent reduction of glutamyl-tRNA(Glu) to glutamate 1-semialdehyde (GSA). This chain is Glutamyl-tRNA reductase, found in Clostridium perfringens (strain 13 / Type A).